A 148-amino-acid chain; its full sequence is Putative antiporter subunit mnhG2 (148 aa).

The next 3 helical transmembrane spans lie at 11-31 (IAAIMIFLGSIIALISSIGLI), 51-71 (VLLTLVGVIIFFISSQGYLSV), and 72-92 (RLILALVFINLTSPVGGHLIS). A disordered region spans residues 125–148 (EQLKQRAHEREERRRKTYEKEHDY). Residues 127-148 (LKQRAHEREERRRKTYEKEHDY) show a composition bias toward basic and acidic residues.

The protein belongs to the CPA3 antiporters (TC 2.A.63) subunit G family. As to quaternary structure, may form a heterooligomeric complex that consists of seven subunits: mnhA2, mnhB2, mnhC2, mnhD2, mnhE2, mnhF2 and mnhG2.

It is found in the cell membrane. The polypeptide is Putative antiporter subunit mnhG2 (mnhG2) (Staphylococcus saprophyticus subsp. saprophyticus (strain ATCC 15305 / DSM 20229 / NCIMB 8711 / NCTC 7292 / S-41)).